Reading from the N-terminus, the 384-residue chain is Organic solute transporter alpha-like protein 1 (384 aa).

The Extracellular portion of the chain corresponds to 1–38 (MEIVKTIIPHNRSYIEPPIPSATEWLANMSVMHVSCLT). N-linked (GlcNAc...) asparagine glycosylation is found at Asn11 and Asn28. The helical transmembrane segment at 39 to 59 (IACVFVAITFLSSFFHLFFVL) threads the bilayer. At 60–70 (KYVSNERIRND) the chain is on the cytoplasmic side. A helical transmembrane segment spans residues 71 to 91 (MYALIFMFPITTFASLVGMFI). At 92–93 (PR) the chain is on the extracellular side. A helical membrane pass occupies residues 94 to 114 (AAIFLYAVSLVYFMFTLFIMV). Over 115–165 (TLLFNIFGGRQEMSAYLLQRNIRVNFTVPPLCFFKFLPTVESTDQNLRRIE) the chain is Cytoplasmic. Residues 166–186 (WLVFQTPIIRTLLELVSVVVS) traverse the membrane as a helical segment. The Extracellular segment spans residues 187-202 (MEQEGRRESVWFVFSQ). Residues 203–223 (LMALLSMCIAFYGCYVMVPLG) traverse the membrane as a helical segment. The Cytoplasmic segment spans residues 224-240 (REKHAPYRFDFLFRTCD). A helical membrane pass occupies residues 241-261 (IAQCIYTIQKFVFEFAAAVGL). Residues 262 to 273 (ITSDRYLPAAAK) lie on the Extracellular side of the membrane. The helical transmembrane segment at 274 to 294 (ALWWASFMCTWEMMLLSALCS) threads the bilayer. Over 295–384 (YCLRPAKCKF…FDSLSQIQGQ (90 aa)) the chain is Cytoplasmic.

Belongs to the OST-alpha family.

It is found in the cell membrane. Its function is as follows. Probable transporter. This is Organic solute transporter alpha-like protein 1 (osta-1) from Caenorhabditis elegans.